A 503-amino-acid chain; its full sequence is Protein DETOXIFICATION 36 (503 aa).

12 helical membrane passes run 54–74 (LFHL…MSML), 87–107 (LAAA…LMLG), 137–157 (IVLV…KPLL), 166–186 (VASV…AYAV), 203–223 (SAYI…LSVF), 225–245 (FGWG…IIVL), 271–293 (GLWD…SWYS), 313–333 (LAIC…FNAA), 355–375 (AVTT…ILSW), 399–419 (FLAI…VAVG), 427–447 (AYVN…VLGF), and 456–476 (IWTG…IVTF).

This sequence belongs to the multi antimicrobial extrusion (MATE) (TC 2.A.66.1) family.

The protein resides in the membrane. The sequence is that of Protein DETOXIFICATION 36 from Arabidopsis thaliana (Mouse-ear cress).